Here is a 654-residue protein sequence, read N- to C-terminus: Endoplasmic reticulum chaperone BiP (654 aa).

The signal sequence occupies residues 1 to 18; sequence MKLSLVAAMLLLLSAARA. Positions 1–80 are required for interaction with ELAPOR1; sequence MKLSLVAAML…EGERLIGDAA (80 aa). 36 to 39 lines the ATP pocket; the sequence is GTTY. Ser86 is modified (phosphoserine). Lys96 provides a ligand contact to ATP. Position 125 is an N6-acetyllysine (Lys125). The segment at 125-280 is nucleotide-binding (NBD); sequence KPYIQVDIGG…KKKTGKDVRK (156 aa). Residue Tyr160 is modified to 3'-nitrotyrosine. Lys213 bears the N6-acetyllysine mark. An ATP-binding site is contributed by 227 to 229; sequence GGT. Residue Lys271 is modified to N6-acetyllysine. ATP is bound at residue 293–300; it reads EKAKRALS. Lys326 is modified (N6-acetyllysine). A Glycyl lysine isopeptide (Lys-Gly) (interchain with G-Cter in SUMO2) cross-link involves residue Lys352. At Lys353 the chain carries N6-acetyllysine; alternate. Lys353 is covalently cross-linked (Glycyl lysine isopeptide (Lys-Gly) (interchain with G-Cter in SUMO1); alternate). 364–367 lines the ATP pocket; sequence GSTR. An interdomain linker region spans residues 409–419; it reads QDTGDLVLLDV. Residues 420-500 are substrate-binding (SBD); the sequence is CPLTLGIETV…PRGVPQIEVT (81 aa). An N6-succinyllysine modification is found at Lys447. Residue Arg492 is modified to Omega-N-methylarginine. Thr518 carries the O-AMP-threonine; alternate modification. Thr518 bears the Phosphothreonine; alternate mark. Position 585 is an N6,N6,N6-trimethyllysine; by METTL21A; in vitro (Lys585). N6,N6-dimethyllysine; alternate is present on Lys585. Residue Lys585 is modified to N6-methyllysine; alternate. The residue at position 591 (Lys591) is an N6-methyllysine. The interval 633–654 is disordered; it reads KLYGSAGPPPTGEEDTAEKDEL. A phosphothreonine mark is found at Thr643 and Thr648. Over residues 644–654 the composition is skewed to acidic residues; the sequence is GEEDTAEKDEL. The short motif at 651–654 is the Prevents secretion from ER element; it reads KDEL.

Belongs to the heat shock protein 70 family. In terms of assembly, monomer and homooligomer; homooligomerization via the interdomain linker inactivates the chaperone activity and acts as a storage of HSPA5/BiP molecules. Interacts with DNAJC1 (via J domain). Component of an EIF2 complex at least composed of CELF1/CUGBP1, CALR, CALR3, EIF2S1, EIF2S2, HSP90B1 and HSPA5. Part of a large chaperone multiprotein complex comprising DNAJB11, HSP90B1, HSPA5, HYOU, PDIA2, PDIA4, PDIA6, PPIB, SDF2L1, UGGT1 and very small amounts of ERP29, but not, or at very low levels, CALR nor CANX. Interacts with TMEM132A and TRIM21. May form a complex with ERLEC1, OS9, SEL1L and SYVN1. Interacts with DNAJC10. Interacts with DNAJB9/ERdj4; leading to recruit HSPA5/BiP to ERN1/IRE1. Interacts with ERN1/IRE1 (via luminal domain); the interaction takes place following interaction with DNAJB9/ERdj4 and leads to inactivate ERN1/IRE1, the interaction also competitively inhibits ERN1 interaction with MANF. Interacts directly with MANF (via SAP domain); the interaction inhibits ATP binding to HSPA5/BiP and subsequent nucleotide exchange. Interacts with EIF2AK3/PERK (via luminal domain); interaction leads to inactivate EIF2AK3/PERK. Interacts with MX1. Interacts with METTL23. Interacts with CEMIP; the interaction induces calcium leakage from the endoplasmic reticulum and cell migration. Interacts with PCSK4 form; the interaction takes place in the endoplasmic reticulum. Interacts with CIPC. Interacts with CCDC88B (via C-terminus); the interaction opposes ERN1-mediated JNK activation, protecting against apoptosis. Interacts with INPP5K; necessary for INPP5K localization at the endoplasmic reticulum. Interacts with MANF; the interaction is direct. Interacts with LOXL2; leading to activate the ERN1/IRE1-XBP1 pathway of the unfolded protein response. Interacts with CLU under stressed condition; interaction increases CLU protein stability; facilitates its retrotranslocation and redistribution to the mitochondria; cooperatively suppress stress-induced apoptosis by stabilizing mitochondrial membrane integrity. Interacts with CCDC47. Interacts with CLN3. Interacts with ELAPOR1; may regulate the function of HSPA5 in apoptosis and cell proliferation. Interacts with CASP7. Interacts with ILDR2; the interaction stabilizes ILDR2 expression. Interacts with ADAM7. (Microbial infection) Interacts with Japanese encephalitis virus envelope protein E. As to quaternary structure, (Microbial infection) Interacts with R.delemar invasin CotH3 on the surface of nasal epithelial cells. Interacts with R.delemar invasin CotH2. In terms of assembly, (Microbial infection) Interacts with Zika virus envelope protein E and non-structural protein 1 in a chaperone-client manner. Post-translationally, AMPylated by FICD. In unstressed cells, AMPylation at Thr-518 by FICD inactivates the chaperome activity: AMPylated form is locked in a relatively inert state and only weakly stimulated by J domain-containing proteins. In response to endoplasmic reticulum stress, de-AMPylation by the same protein, FICD, restores the chaperone activity.

It localises to the endoplasmic reticulum lumen. It is found in the melanosome. The protein localises to the cytoplasm. The protein resides in the cell surface. It catalyses the reaction ATP + H2O = ADP + phosphate + H(+). Its activity is regulated as follows. The chaperone activity is regulated by ATP-induced allosteric coupling of the nucleotide-binding (NBD) and substrate-binding (SBD) domains. In the ADP-bound and nucleotide-free (apo) states, the two domains have little interaction. In contrast, in the ATP-bound state the two domains are tightly coupled, which results in drastically accelerated kinetics in both binding and release of polypeptide substrates. J domain-containing co-chaperones (DNAJB9/ERdj4 or DNAJC10/ERdj5) stimulate the ATPase activity and are required for efficient substrate recognition by HSPA5/BiP. Homooligomerization inactivates participating HSPA5/BiP protomers and probably act as reservoirs to store HSPA5/BiP molecules when they are not needed by the cell. In terms of biological role, endoplasmic reticulum chaperone that plays a key role in protein folding and quality control in the endoplasmic reticulum lumen. Involved in the correct folding of proteins and degradation of misfolded proteins via its interaction with DNAJC10/ERdj5, probably to facilitate the release of DNAJC10/ERdj5 from its substrate. Acts as a key repressor of the EIF2AK3/PERK and ERN1/IRE1-mediated unfolded protein response (UPR). In the unstressed endoplasmic reticulum, recruited by DNAJB9/ERdj4 to the luminal region of ERN1/IRE1, leading to disrupt the dimerization of ERN1/IRE1, thereby inactivating ERN1/IRE1. Also binds and inactivates EIF2AK3/PERK in unstressed cells. Accumulation of misfolded protein in the endoplasmic reticulum causes release of HSPA5/BiP from ERN1/IRE1 and EIF2AK3/PERK, allowing their homodimerization and subsequent activation. Plays an auxiliary role in post-translational transport of small presecretory proteins across endoplasmic reticulum (ER). May function as an allosteric modulator for SEC61 channel-forming translocon complex, likely cooperating with SEC62 to enable the productive insertion of these precursors into SEC61 channel. Appears to specifically regulate translocation of precursors having inhibitory residues in their mature region that weaken channel gating. May also play a role in apoptosis and cell proliferation. Its function is as follows. (Microbial infection) Plays an important role in viral binding to the host cell membrane and entry for several flaviruses such as Dengue virus, Zika virus and Japanese encephalitis virus. Acts as a component of the cellular receptor for Dengue virus serotype 2/DENV-2 on human liver cells. Functionally, (Microbial infection) Acts as a receptor for CotH proteins expressed by fungi of the order mucorales, the causative agent of mucormycosis, which plays an important role in epithelial cell invasion by the fungi. Acts as a receptor for R.delemar CotH3 in nasal epithelial cells, which may be an early step in rhinoorbital/cerebral mucormycosis (RCM) disease progression. This Homo sapiens (Human) protein is Endoplasmic reticulum chaperone BiP.